Consider the following 151-residue polypeptide: 3-dehydroquinate dehydratase (151 aa).

Tyr-24 acts as the Proton acceptor in catalysis. Substrate-binding residues include Asn-76, His-82, and Asp-89. Residue His-102 is the Proton donor of the active site. Residues 103-104 (LS) and Arg-113 contribute to the substrate site.

It belongs to the type-II 3-dehydroquinase family. In terms of assembly, homododecamer.

It carries out the reaction 3-dehydroquinate = 3-dehydroshikimate + H2O. It participates in metabolic intermediate biosynthesis; chorismate biosynthesis; chorismate from D-erythrose 4-phosphate and phosphoenolpyruvate: step 3/7. In terms of biological role, catalyzes a trans-dehydration via an enolate intermediate. The polypeptide is 3-dehydroquinate dehydratase (Acinetobacter baumannii (strain ATCC 17978 / DSM 105126 / CIP 53.77 / LMG 1025 / NCDC KC755 / 5377)).